A 243-amino-acid polypeptide reads, in one-letter code: Probable transcriptional regulatory protein PTH_1024 (243 aa).

It belongs to the TACO1 family.

It localises to the cytoplasm. This chain is Probable transcriptional regulatory protein PTH_1024, found in Pelotomaculum thermopropionicum (strain DSM 13744 / JCM 10971 / SI).